The sequence spans 258 residues: Acetylglutamate kinase (258 aa).

Substrate-binding positions include 41–42 (GG), Arg63, and Asn156.

This sequence belongs to the acetylglutamate kinase family. ArgB subfamily.

The protein resides in the cytoplasm. The catalysed reaction is N-acetyl-L-glutamate + ATP = N-acetyl-L-glutamyl 5-phosphate + ADP. It functions in the pathway amino-acid biosynthesis; L-arginine biosynthesis; N(2)-acetyl-L-ornithine from L-glutamate: step 2/4. Its function is as follows. Catalyzes the ATP-dependent phosphorylation of N-acetyl-L-glutamate. This chain is Acetylglutamate kinase, found in Bacillus licheniformis (strain ATCC 14580 / DSM 13 / JCM 2505 / CCUG 7422 / NBRC 12200 / NCIMB 9375 / NCTC 10341 / NRRL NRS-1264 / Gibson 46).